A 266-amino-acid polypeptide reads, in one-letter code: Putative carbamate hydrolase RutD (266 aa).

The 103-residue stretch at 14 to 116 (PVVVLISGLG…VLVSVNGWLR (103 aa)) folds into the AB hydrolase-1 domain.

It belongs to the AB hydrolase superfamily. Hydrolase RutD family.

It carries out the reaction carbamate + 2 H(+) = NH4(+) + CO2. Functionally, involved in pyrimidine catabolism. May facilitate the hydrolysis of carbamate, a reaction that can also occur spontaneously. The chain is Putative carbamate hydrolase RutD from Escherichia coli O81 (strain ED1a).